A 726-amino-acid polypeptide reads, in one-letter code: Penicillin-binding protein 1A (726 aa).

Residues 1–3 (MKK) are Cytoplasmic-facing. Residues 4–24 (LVIGILGIVIALFVGLLVFLI) form a helical; Signal-anchor for type II membrane protein membrane-spanning segment. Over 25–726 (PIYKNLPDPK…SDLNAILGLR (702 aa)) the chain is Periplasmic. Residues 45–213 (SEVYDAKGRL…AKYNPFYHPE (169 aa)) are transglycosylase. Glutamate 83 functions as the Proton donor; for transglycosylase activity in the catalytic mechanism. Residues 379-662 (KYLGGNRAEI…SRVALPIWID (284 aa)) are transpeptidase. Serine 432 acts as the Acyl-ester intermediate; for transpeptidase activity in catalysis.

This sequence in the N-terminal section; belongs to the glycosyltransferase 51 family. The protein in the C-terminal section; belongs to the transpeptidase family.

The protein localises to the cell inner membrane. The catalysed reaction is [GlcNAc-(1-&gt;4)-Mur2Ac(oyl-L-Ala-gamma-D-Glu-L-Lys-D-Ala-D-Ala)](n)-di-trans,octa-cis-undecaprenyl diphosphate + beta-D-GlcNAc-(1-&gt;4)-Mur2Ac(oyl-L-Ala-gamma-D-Glu-L-Lys-D-Ala-D-Ala)-di-trans,octa-cis-undecaprenyl diphosphate = [GlcNAc-(1-&gt;4)-Mur2Ac(oyl-L-Ala-gamma-D-Glu-L-Lys-D-Ala-D-Ala)](n+1)-di-trans,octa-cis-undecaprenyl diphosphate + di-trans,octa-cis-undecaprenyl diphosphate + H(+). The enzyme catalyses Preferential cleavage: (Ac)2-L-Lys-D-Ala-|-D-Ala. Also transpeptidation of peptidyl-alanyl moieties that are N-acyl substituents of D-alanine.. It functions in the pathway cell wall biogenesis; peptidoglycan biosynthesis. This is Penicillin-binding protein 1A (mrcA) from Aquifex aeolicus (strain VF5).